Consider the following 208-residue polypeptide: Large ribosomal subunit protein bL9 (208 aa).

A disordered region spans residues 161-208; the sequence is KKRKIEKEVEEGSGTSVDESLKLDSVSDSIDTSGVNSSDKEEENNIIE. Over residues 186–197 the composition is skewed to polar residues; it reads VSDSIDTSGVNS.

This sequence belongs to the bacterial ribosomal protein bL9 family.

Functionally, binds to the 23S rRNA. The protein is Large ribosomal subunit protein bL9 of Ehrlichia canis (strain Jake).